A 32-amino-acid polypeptide reads, in one-letter code: CIPKWNRCGPKMDGVPCCEPYTCTSDYYGNCS.

3 cysteine pairs are disulfide-bonded: Cys-1-Cys-18, Cys-8-Cys-23, and Cys-17-Cys-31.

Endosperm.

Alpha-amylase inhibitor. It is active against alpha-amylases from Tribolium castaneum and Prostephanus truncatus larvae. The polypeptide is Alpha-amylase inhibitor AAI (AAI) (Amaranthus hypochondriacus (Prince-of-Wales feather)).